Reading from the N-terminus, the 212-residue chain is NADH dehydrogenase [ubiquinone] iron-sulfur protein 8, mitochondrial (212 aa).

A mitochondrion-targeting transit peptide spans 1–36; sequence MRCLTMPMLLRALAQAQAARAGHASVRGLHSSAVAA. 4Fe-4S ferredoxin-type domains lie at 104–133 and 143–172; these read RRYP…IEAE and TRYD…EGPN. [4Fe-4S] cluster is bound by residues cysteine 113, cysteine 116, cysteine 119, cysteine 123, cysteine 152, cysteine 155, cysteine 158, and cysteine 162.

This sequence belongs to the complex I 23 kDa subunit family. In terms of assembly, core subunit of respiratory chain NADH dehydrogenase (Complex I) which is composed of 45 different subunits. This is a component of the iron-sulfur (IP) fragment of the enzyme. Interacts with RAB5IF. [4Fe-4S] cluster serves as cofactor.

The protein resides in the mitochondrion inner membrane. It carries out the reaction a ubiquinone + NADH + 5 H(+)(in) = a ubiquinol + NAD(+) + 4 H(+)(out). In terms of biological role, core subunit of the mitochondrial membrane respiratory chain NADH dehydrogenase (Complex I) which catalyzes electron transfer from NADH through the respiratory chain, using ubiquinone as an electron acceptor. Essential for the catalytic activity and assembly of complex I. The chain is NADH dehydrogenase [ubiquinone] iron-sulfur protein 8, mitochondrial (NDUFS8) from Bos taurus (Bovine).